Reading from the N-terminus, the 60-residue chain is Large ribosomal subunit protein uL30 (60 aa).

Belongs to the universal ribosomal protein uL30 family. Part of the 50S ribosomal subunit.

The chain is Large ribosomal subunit protein uL30 from Verminephrobacter eiseniae (strain EF01-2).